Reading from the N-terminus, the 923-residue chain is RNA polymerase-associated protein RapA (923 aa).

Residues 162-332 (EVGNRVNPRV…FARLRLLDPE (171 aa)) form the Helicase ATP-binding domain. 175-182 (DEVGLGKT) is a binding site for ATP. Positions 278–281 (DEAH) match the DEAH box motif. The 155-residue stretch at 443–597 (KIDWLIDFLK…TCPMGMALFS (155 aa)) folds into the Helicase C-terminal domain.

The protein belongs to the SNF2/RAD54 helicase family. RapA subfamily. As to quaternary structure, interacts with the RNAP. Has a higher affinity for the core RNAP than for the holoenzyme. Its ATPase activity is stimulated by binding to RNAP.

Transcription regulator that activates transcription by stimulating RNA polymerase (RNAP) recycling in case of stress conditions such as supercoiled DNA or high salt concentrations. Probably acts by releasing the RNAP, when it is trapped or immobilized on tightly supercoiled DNA. Does not activate transcription on linear DNA. Probably not involved in DNA repair. This chain is RNA polymerase-associated protein RapA, found in Haemophilus influenzae (strain ATCC 51907 / DSM 11121 / KW20 / Rd).